Here is a 138-residue protein sequence, read N- to C-terminus: 1,4-dihydroxy-2-naphthoyl-CoA hydrolase (138 aa).

Aspartate 16 is an active-site residue.

Belongs to the 4-hydroxybenzoyl-CoA thioesterase family. DHNA-CoA hydrolase subfamily.

The enzyme catalyses 1,4-dihydroxy-2-naphthoyl-CoA + H2O = 1,4-dihydroxy-2-naphthoate + CoA + H(+). It participates in cofactor biosynthesis; phylloquinone biosynthesis. It functions in the pathway quinol/quinone metabolism; 1,4-dihydroxy-2-naphthoate biosynthesis; 1,4-dihydroxy-2-naphthoate from chorismate: step 7/7. Its function is as follows. Catalyzes the specific hydrolysis of 1,4-dihydroxy-2-naphthoyl-CoA (DHNA-CoA) to 1,4-dihydroxy-2-naphthoate (DHNA), a reaction involved in phylloquinone (vitamin K1) biosynthesis. Is not active on benzoyl-CoA, phenylacetyl-CoA and aliphatic acyl-CoA thioesters. This is 1,4-dihydroxy-2-naphthoyl-CoA hydrolase from Synechocystis sp. (strain ATCC 27184 / PCC 6803 / Kazusa).